An 804-amino-acid polypeptide reads, in one-letter code: Leucine--tRNA ligase (804 aa).

Positions 40–51 (PYPSGAGLHVGH) match the 'HIGH' region motif. The short motif at 576 to 580 (KMSKS) is the 'KMSKS' region element. Lys-579 contributes to the ATP binding site.

This sequence belongs to the class-I aminoacyl-tRNA synthetase family.

Its subcellular location is the cytoplasm. It catalyses the reaction tRNA(Leu) + L-leucine + ATP = L-leucyl-tRNA(Leu) + AMP + diphosphate. In Bacillus pumilus (strain SAFR-032), this protein is Leucine--tRNA ligase.